The primary structure comprises 91 residues: MRWPVIILAVLVVVLQYPLWLGKGGWLRVWEVDRKLHEQREENTRLEERNAGLDAEVRDLKSGNEAIEERARLELGLTKPNEIFVQVPQKH.

Residues 1–3 (MRW) lie on the Cytoplasmic side of the membrane. A helical transmembrane segment spans residues 4 to 21 (PVIILAVLVVVLQYPLWL). Topologically, residues 22 to 91 (GKGGWLRVWE…EIFVQVPQKH (70 aa)) are periplasmic. The stretch at 28–72 (RVWEVDRKLHEQREENTRLEERNAGLDAEVRDLKSGNEAIEERAR) forms a coiled coil.

This sequence belongs to the FtsB family. In terms of assembly, part of a complex composed of FtsB, FtsL and FtsQ.

Its subcellular location is the cell inner membrane. Functionally, essential cell division protein. May link together the upstream cell division proteins, which are predominantly cytoplasmic, with the downstream cell division proteins, which are predominantly periplasmic. The protein is Cell division protein FtsB of Azoarcus sp. (strain BH72).